The primary structure comprises 147 residues: MRSLLVLVLCFLPLAALGKVYGRCELAAAMKRHGLDKYQGYSLGNWVCAAKFESNFNTQATNRNTDGSTDYGILQINSRWWCNDGRTPGSRNLCNIPCSALLSSDITASVNCAKKIVSDVHGMNAWVAWRNRCKGTDVNAWIRGCRL.

The first 18 residues, M1 to G18, serve as a signal peptide directing secretion. The C-type lysozyme domain occupies K19 to L147. 4 disulfide bridges follow: C24–C145, C48–C133, C82–C98, and C94–C112. Residues E53 and D70 contribute to the active site.

It belongs to the glycosyl hydrolase 22 family. Monomer.

The protein localises to the secreted. The catalysed reaction is Hydrolysis of (1-&gt;4)-beta-linkages between N-acetylmuramic acid and N-acetyl-D-glucosamine residues in a peptidoglycan and between N-acetyl-D-glucosamine residues in chitodextrins.. In terms of biological role, lysozymes have primarily a bacteriolytic function; those in tissues and body fluids are associated with the monocyte-macrophage system and enhance the activity of immunoagents. The polypeptide is Lysozyme C (LYZ) (Coturnix japonica (Japanese quail)).